We begin with the raw amino-acid sequence, 405 residues long: Double C2-like domain-containing protein alpha (405 aa).

The tract at residues 1–94 is interaction with UNC13D and DYNLT1; sequence MRGRRGDRMT…DSYDSDDTTA (94 aa). Residues 34–54 are disordered; sequence DYFPRRGPGPEGGGGGGGTGC. The segment covering 42 to 54 has biased composition (gly residues); the sequence is GPEGGGGGGGTGC. C2 domains lie at 94 to 216 and 256 to 389; these read ALGT…HFNI and ERGR…ERWH. Residues aspartate 125, aspartate 131, aspartate 186, aspartate 188, aspartate 287, aspartate 293, aspartate 347, aspartate 349, and aspartate 355 each contribute to the Ca(2+) site. Positions 220 to 405 are interaction with UNC13D; it reads RQVPLPSPSS…PPAAGAYPLA (186 aa).

Interacts (via N-terminus) with UNC13A. Interacts with cytoplasmic dynein light chain DYNLT1. Interacts with UNC13D. Ca(2+) serves as cofactor. Brain and mast cells.

It is found in the cytoplasmic vesicle. The protein localises to the secretory vesicle. The protein resides in the synaptic vesicle membrane. It localises to the synapse. Its subcellular location is the synaptosome. It is found in the lysosome. Functionally, calcium sensor which most probably regulates fusion of vesicles with membranes. Binds calcium and phospholipids. May be involved in calcium dependent neurotransmitter release through the interaction with UNC13A. May be involved in calcium-dependent spontaneous release of neurotransmitter in absence of action potentials in neuronal cells. Regulates Ca(2+)-dependent secretory lysosome exocytosis in mast cells. In Mus musculus (Mouse), this protein is Double C2-like domain-containing protein alpha (Doc2a).